The sequence spans 360 residues: Peptide chain release factor 1 (360 aa).

Gln-235 carries the post-translational modification N5-methylglutamine.

The protein belongs to the prokaryotic/mitochondrial release factor family. Post-translationally, methylated by PrmC. Methylation increases the termination efficiency of RF1.

The protein localises to the cytoplasm. Peptide chain release factor 1 directs the termination of translation in response to the peptide chain termination codons UAG and UAA. This is Peptide chain release factor 1 from Blochmanniella pennsylvanica (strain BPEN).